The following is a 273-amino-acid chain: Manganese catalase (273 aa).

Glu-35 is a binding site for Mn(2+). 2 residues coordinate Ca(2+): Asp-57 and Asp-61. Positions 66, 69, 149, and 182 each coordinate Mn(2+). Asn-220, Ser-222, and Gly-224 together coordinate Ca(2+). Positions 254 to 273 are disordered; sequence EKPELKPAPPCVHNTLPGRE.

The protein belongs to the manganese catalase family. As to quaternary structure, homohexamer. It depends on Ca(2+) as a cofactor. Requires Mn(2+) as cofactor.

The catalysed reaction is 2 H2O2 = O2 + 2 H2O. Inhibited in the presence of EDTA. Resistant to inhibition by sodium azide. Functionally, catalyzes the decomposition of hydrogen peroxide into water and oxygen. No significant activity could be detected with any of the other tested substrates, including glutathione, pyrogallol, NADH, NADPH and o-dianisidine. The chain is Manganese catalase from Bacillus subtilis.